Reading from the N-terminus, the 151-residue chain is Large ribosomal subunit protein bL9 (151 aa).

Belongs to the bacterial ribosomal protein bL9 family.

In terms of biological role, binds to the 23S rRNA. This Carboxydothermus hydrogenoformans (strain ATCC BAA-161 / DSM 6008 / Z-2901) protein is Large ribosomal subunit protein bL9.